The sequence spans 242 residues: ATP-dependent dethiobiotin synthetase BioD (242 aa).

An ATP-binding site is contributed by 15-20 (DVGKTV). Mg(2+) is bound at residue Thr-19. Residue Lys-40 is part of the active site. Ser-44 lines the substrate pocket. Glu-117 lines the Mg(2+) pocket. ATP contacts are provided by residues 117 to 120 (EGAG), 178 to 179 (NQ), and 208 to 210 (PYS).

Belongs to the dethiobiotin synthetase family. In terms of assembly, homodimer. It depends on Mg(2+) as a cofactor.

The protein localises to the cytoplasm. The catalysed reaction is (7R,8S)-7,8-diammoniononanoate + CO2 + ATP = (4R,5S)-dethiobiotin + ADP + phosphate + 3 H(+). Its pathway is cofactor biosynthesis; biotin biosynthesis; biotin from 7,8-diaminononanoate: step 1/2. Catalyzes a mechanistically unusual reaction, the ATP-dependent insertion of CO2 between the N7 and N8 nitrogen atoms of 7,8-diaminopelargonic acid (DAPA, also called 7,8-diammoniononanoate) to form a ureido ring. The sequence is that of ATP-dependent dethiobiotin synthetase BioD from Halalkalibacterium halodurans (strain ATCC BAA-125 / DSM 18197 / FERM 7344 / JCM 9153 / C-125) (Bacillus halodurans).